A 327-amino-acid polypeptide reads, in one-letter code: Surface protein P12p (327 aa).

2 6-Cys domains span residues 21-168 (NIEI…LKKN) and 169-304 (IIFG…FSNY). 6 disulfide bridges follow: C25–C60, C74–C144, C93–C142, C173–C208, C223–C285, and C234–C283. N-linked (GlcNAc...) asparagine glycans are attached at residues N246, N264, and N298.

It is found in the cell surface. The protein localises to the cell membrane. This Plasmodium berghei (strain Anka) protein is Surface protein P12p (P12p).